The chain runs to 426 residues: Adenylosuccinate synthetase (426 aa).

GTP-binding positions include 11-17 and 39-41; these read GDEGKGK and GHT. The Proton acceptor role is filled by Asp12. Mg(2+) is bound by residues Asp12 and Gly39. IMP contacts are provided by residues 12 to 15, 37 to 40, Thr130, Arg144, Asn226, Thr241, and Arg305; these read DEGK and NAGH. The Proton donor role is filled by His40. Residue 301–307 participates in substrate binding; the sequence is VTTGRKR. Residues Arg307, 333–335, and 415–417 each bind GTP; these read KLD and GTG.

The protein belongs to the adenylosuccinate synthetase family. In terms of assembly, homodimer. It depends on Mg(2+) as a cofactor.

The protein localises to the cytoplasm. It carries out the reaction IMP + L-aspartate + GTP = N(6)-(1,2-dicarboxyethyl)-AMP + GDP + phosphate + 2 H(+). It functions in the pathway purine metabolism; AMP biosynthesis via de novo pathway; AMP from IMP: step 1/2. Plays an important role in the de novo pathway and in the salvage pathway of purine nucleotide biosynthesis. Catalyzes the first committed step in the biosynthesis of AMP from IMP. This is Adenylosuccinate synthetase from Meyerozyma guilliermondii (strain ATCC 6260 / CBS 566 / DSM 6381 / JCM 1539 / NBRC 10279 / NRRL Y-324) (Yeast).